The sequence spans 237 residues: UPF0174 protein YaaW (237 aa).

It belongs to the UPF0174 family.

This is UPF0174 protein YaaW (yaaW) from Escherichia coli (strain K12).